The following is a 661-amino-acid chain: MKTVRESTTLYNFLGSHNPYWRLTESSDVLRFSTTETTEPDRTLQLSAEQAARIREMTVITSSLMMSLTVDESDLSVHLVGRKINKREWAGNASAWHDTPAVARDLSHGLSFAEQVVSEAHSAIVILDSRGNIQRFNRLCEDYTGLKEHDVIGQSVFKLFMSRREAAASRRNNRVFFRSGNAYEVELWIPTCKGQRLFLFRNKFVHSGSGKNEIFLICSGTDITEERRAQERLRILANTDSITGLPNRNAMQDLIDHAINHADNNKVGVVYLDLDNFKKVNDAYGHLFGDQLLRDVSLAILSCLEHDQVLARPGGDEFLVLASNTSQSALEAMASRILTRLRLPFRIGLIEVYTSCSVGIALSPEHGSDSTAIIRHADTAMYTAKEGGRGQFCVFTPEMNQRVFEYLWLDTNLRKALENDQLVIHYQPKITWRGEVRSLEALVRWQSPERGLIPPLDFISYAEESGLIVPLGRWVILDVVRQVAKWRDKGINLRVAVNISARQLADQTIFTALKQVLQELNFEYCPIDVELTESCLIENDELALSVIQQFSQLGAQVHLDDFGTGYSSLSQLARFPIDAIKLDQVFVRDIHKQPVSQSLVRAIVAVAQALNLQVIAEGVESAKEDAFLTKNGINERQGFLFAKPMPAVAFERWYKRYLKRA.

One can recognise a PAS domain in the interval 109–179 (GLSFAEQVVS…RRNNRVFFRS (71 aa)). Residues 265 to 397 (NKVGVVYLDL…GRGQFCVFTP (133 aa)) enclose the GGDEF domain. Positions 406–658 (YLWLDTNLRK…AFERWYKRYL (253 aa)) constitute an EAL domain.

As to quaternary structure, interacts with DgcM and MlrA.

It catalyses the reaction 3',3'-c-di-GMP + H2O = 5'-phosphoguanylyl(3'-&gt;5')guanosine + H(+). In terms of biological role, part of a signaling cascade that regulates curli biosynthesis. The cascade is composed of two cyclic-di-GMP (c-di-GMP) control modules, in which c-di-GMP controlled by the DgcE/PdeH pair (module I) regulates the activity of the DgcM/PdeR pair (module II), which in turn regulates activity of the transcription factor MlrA and expression of the master biofilm regulator csgD. PdeR acts as a trigger enzyme that connects modules I and II. It inhibits DgcM and MlrA by direct interaction. Inhibition is relieved when PdeR binds and degrades c-di-GMP generated by module I. The chain is Cyclic di-GMP phosphodiesterase PdeR from Escherichia coli (strain K12).